The sequence spans 229 residues: Protein fmp52-2, mitochondrial (229 aa).

The transit peptide at methionine 1–lysine 44 directs the protein to the mitochondrion.

This sequence belongs to the FMP52 family.

Its subcellular location is the mitochondrion outer membrane. This chain is Protein fmp52-2, mitochondrial (fmp522), found in Aspergillus terreus (strain NIH 2624 / FGSC A1156).